A 149-amino-acid polypeptide reads, in one-letter code: UPAR/Ly6 domain-containing protein bou (149 aa).

The N-terminal stretch at 1–31 is a signal peptide; that stretch reads MWPPKHAHIGWLSSLALVVLLMSLQMVMVSG. Residues 32-126 lie on the Extracellular side of the membrane; that stretch reads IECYVCDTSD…YTCDTDGCNA (95 aa). 5 disulfides stabilise this stretch: cysteine 34–cysteine 74, cysteine 37–cysteine 48, cysteine 65–cysteine 91, cysteine 100–cysteine 115, and cysteine 119–cysteine 124. A glycan (N-linked (GlcNAc...) asparagine) is linked at asparagine 64. Asparagine 125 carries GPI-anchor amidated asparagine lipidation. A propeptide spans 126-149 (removed in mature form); it reads AAGRLELEWGVAAALLTLTWLLRH. Residues 127–147 form a helical membrane-spanning segment; sequence AGRLELEWGVAAALLTLTWLL. Residues 148-149 are Cytoplasmic-facing; that stretch reads RH.

Post-translationally, GPI-anchored.

Its subcellular location is the cell membrane. The protein resides in the cell junction. It is found in the septate junction. The protein localises to the cytoplasm. It localises to the cell cortex. Its subcellular location is the secreted. The protein resides in the apicolateral cell membrane. In terms of biological role, involved in tracheal paracellular barrier functions mediated by epithelial cell septate junctions. Involved in paracellular barrier functions mediated by glial cell septate junctions in the peripheral nervous system, including the chordotonal organs, but not the hemolymph-brain barrier (the insect blood-brain barrier) of the central nervous system. Required for septate junction assembly, possibly by organizing the preassembly and transport of septate junction proteins such as dlg1/disks large 1, Nrx-IV/Neurexin-IV and the claudin protein kune. Involved in chitin fiber organization during tracheal development. Secreted, possibly in association with extracellular vesicles, to act non-autonomously on tissues distant from its site of expression. The sequence is that of UPAR/Ly6 domain-containing protein bou from Drosophila melanogaster (Fruit fly).